A 100-amino-acid polypeptide reads, in one-letter code: Putative pterin-4-alpha-carbinolamine dehydratase (100 aa).

It belongs to the pterin-4-alpha-carbinolamine dehydratase family.

It carries out the reaction (4aS,6R)-4a-hydroxy-L-erythro-5,6,7,8-tetrahydrobiopterin = (6R)-L-erythro-6,7-dihydrobiopterin + H2O. The sequence is that of Putative pterin-4-alpha-carbinolamine dehydratase from Alteromonas mediterranea (strain DSM 17117 / CIP 110805 / LMG 28347 / Deep ecotype).